The primary structure comprises 371 residues: Phosphate acyltransferase (371 aa).

It belongs to the PlsX family. Homodimer. Probably interacts with PlsY.

Its subcellular location is the cytoplasm. It catalyses the reaction a fatty acyl-[ACP] + phosphate = an acyl phosphate + holo-[ACP]. It functions in the pathway lipid metabolism; phospholipid metabolism. In terms of biological role, catalyzes the reversible formation of acyl-phosphate (acyl-PO(4)) from acyl-[acyl-carrier-protein] (acyl-ACP). This enzyme utilizes acyl-ACP as fatty acyl donor, but not acyl-CoA. The sequence is that of Phosphate acyltransferase from Ruegeria pomeroyi (strain ATCC 700808 / DSM 15171 / DSS-3) (Silicibacter pomeroyi).